The following is a 195-amino-acid chain: MELEVFAGQEKSELSMIEVARAILELRGRDHEMYFNDLVNEIQTYLEKSNSEIREALPLFYTELNVDGSFIPLGDNKWGLRSWYAIDEVDEEIIALEETDEEDNPKSRKKKRVNAFMDGDEDAIDYSDDDPEDEDSYEADPALNYDDENPDDEKNEADAYDAEINEIAPDDLDEDVDINEEDDEFSDDDAEGEEE.

The HTH HARE-type domain maps to Leu-14 to Trp-83. 2 stretches are compositionally biased toward acidic residues: residues Gly-119–Glu-138 and Tyr-145–Glu-195. A disordered region spans residues Gly-119 to Glu-195.

It belongs to the RpoE family. As to quaternary structure, RNAP is composed of a core of 2 alpha, a beta and a beta' subunits. The core is associated with a delta subunit and one of several sigma factors.

Participates in both the initiation and recycling phases of transcription. In the presence of the delta subunit, RNAP displays an increased specificity of transcription, a decreased affinity for nucleic acids, and an increased efficiency of RNA synthesis because of enhanced recycling. The sequence is that of Probable DNA-directed RNA polymerase subunit delta from Streptococcus gordonii (strain Challis / ATCC 35105 / BCRC 15272 / CH1 / DL1 / V288).